Reading from the N-terminus, the 114-residue chain is UPF0102 protein Shew_0226 (114 aa).

This sequence belongs to the UPF0102 family.

This is UPF0102 protein Shew_0226 from Shewanella loihica (strain ATCC BAA-1088 / PV-4).